The chain runs to 509 residues: Protein Jade-1 (509 aa).

Positions 1-45 (MKRGRLPSSSEDSDDNGSLSTTWSQNSRSQHRRSSCSRPEDRKPS) are disordered. The interval 60-80 (DSYQLNPDEYYVLADPWRQEW) is interaction with KAT7/HBO1 and histones. The tract at residues 80-188 (WEKGVQVPVS…EQRCYDNMNH (109 aa)) is interaction with histones. Phosphoserine is present on Ser89. The residue at position 92 (Thr92) is a Phosphothreonine. A Glycyl lysine isopeptide (Lys-Gly) (interchain with G-Cter in SUMO2) cross-link involves residue Lys114. The PHD-type 1 zinc finger occupies 203–253 (YVVCDVCQSPDGEDGNEMVFCDKCNICVHQACYGILKVPEGSWLCRTCALG). The segment at 255 to 289 (QPKCLLCPKKGGAMKPTRSGTKWVHVSCALWIPEV) adopts a C2HC pre-PHD-type zinc-finger fold. A PHD-type 2 zinc finger spans residues 313–369 (LVCSLCNEKFGASIQCSVKNCRTAFHVTCAFDRGLEMKTILAENDEVKFKSYCPKHS). The disordered stretch occupies residues 373 to 399 (KAEEGLGEGTAQENGAPECSPRDPLEP).

The protein belongs to the JADE family. Component of the HBO1 complex composed at least of ING4 or ING5, KAT7/HBO1, MEAF6, and one of JADE1, JADE2 and JADE3. Interacts with NPHP4.

Its subcellular location is the nucleus. The protein localises to the chromosome. It localises to the cytoplasm. It is found in the cytoskeleton. The protein resides in the cilium basal body. Scaffold subunit of some HBO1 complexes, which have a histone H4 acetyltransferase activity. Plays a key role in HBO1 complex by directing KAT7/HBO1 specificity towards histone H4 acetylation (H4K5ac, H4K8ac and H4K12ac), regulating DNA replication initiation, regulating DNA replication initiation. May also promote acetylation of nucleosomal histone H4 by KAT5. Promotes apoptosis. May act as a renal tumor suppressor. Negatively regulates canonical Wnt signaling; at least in part, cooperates with NPHP4 in this function. This Bos taurus (Bovine) protein is Protein Jade-1 (JADE1).